Reading from the N-terminus, the 177-residue chain is Nucleoside triphosphate/diphosphate phosphatase (177 aa).

The Proton donor role is filled by Arg-23. Residues Asn-87, Asp-103, Asp-105, Asp-107, Asp-120, and Glu-123 each contribute to the Mg(2+) site.

It belongs to the Ntdp family. Mg(2+) is required as a cofactor.

The catalysed reaction is a ribonucleoside 5'-triphosphate + H2O = a ribonucleoside 5'-diphosphate + phosphate + H(+). The enzyme catalyses a ribonucleoside 5'-diphosphate + H2O = a ribonucleoside 5'-phosphate + phosphate + H(+). Functionally, has nucleoside phosphatase activity towards nucleoside triphosphates and nucleoside diphosphates. The chain is Nucleoside triphosphate/diphosphate phosphatase from Streptococcus pyogenes serotype M1.